The chain runs to 128 residues: MAKRVQTKKKVRKNIASGVVHIQSTFNNTIVTVTDVAGNVISWSSAGGRGFKGSRKSTPFAAQMASEDAVKKAMAQGLQTVEVYVKGPGPGRESALRALQAAGLTVTMIRDVTPIPHNGCRPPKRRRV.

The protein belongs to the universal ribosomal protein uS11 family. As to quaternary structure, part of the 30S ribosomal subunit. Interacts with proteins S7 and S18. Binds to IF-3.

In terms of biological role, located on the platform of the 30S subunit, it bridges several disparate RNA helices of the 16S rRNA. Forms part of the Shine-Dalgarno cleft in the 70S ribosome. This chain is Small ribosomal subunit protein uS11, found in Desulfosudis oleivorans (strain DSM 6200 / JCM 39069 / Hxd3) (Desulfococcus oleovorans).